The chain runs to 398 residues: Calreticulin (398 aa).

The signal sequence occupies residues 1–19 (MKAVVLVVVSLLALSSINC). The segment at 20–197 (DVFFEEKFPD…NEKVESGDLE (178 aa)) is N-domain. A disulfide bridge connects residues C105 and C137. An alpha-D-glucoside-binding residues include Y109, K111, Y128, and D135. 7 consecutive repeat copies span residues 191 to 202 (VESGDLEADWDF), 210 to 221 (DPEAKKPEDWDD), 227 to 238 (DPEDKKPEDWDK), 244 to 255 (DPDATKPEDWDD), 259 to 269 (GEWEPPMIDNP), 273 to 283 (GVWAPKQIDNP), and 287 to 297 (GPWVHPEIDNP). The 4 X approximate repeats stretch occupies residues 191 to 255 (VESGDLEADW…DATKPEDWDD (65 aa)). The tract at residues 198–308 (ADWDFLPNKK…YTPDSNLYKR (111 aa)) is P-domain. Positions 207-251 (KIKDPEAKKPEDWDDKPTIPDPEDKKPEDWDKPEHIPDPDATKPE) are enriched in basic and acidic residues. The tract at residues 207–257 (KIKDPEAKKPEDWDDKPTIPDPEDKKPEDWDKPEHIPDPDATKPEDWDDEM) is disordered. The interval 259–297 (GEWEPPMIDNPDYKGVWAPKQIDNPAYKGPWVHPEIDNP) is 3 X approximate repeats. Positions 309–398 (DEICAVGLDL…AAPVEEHDEL (90 aa)) are C-domain. Residue D317 coordinates an alpha-D-glucoside. Positions 334 to 398 (DDPAAAKERG…AAPVEEHDEL (65 aa)) are disordered. Positions 337–372 (AAAKERGEVIKKRQEGEKKMKSEQDEAEREKEKAEK) are enriched in basic and acidic residues. Positions 373 to 387 (PDDEEDDEDLDDETG) are enriched in acidic residues. Positions 395-398 (HDEL) match the Prevents secretion from ER motif.

The protein belongs to the calreticulin family. Monomer. In terms of tissue distribution, expressed in fat bodies. Not expressed in midgut, silk gland, ovary or testis.

It is found in the endoplasmic reticulum lumen. Functionally, molecular calcium-binding chaperone promoting folding, oligomeric assembly and quality control in the ER via the calreticulin/calnexin cycle. This lectin may interact transiently with almost all of the monoglucosylated glycoproteins that are synthesized in the ER. The polypeptide is Calreticulin (Bombyx mori (Silk moth)).